The primary structure comprises 422 residues: MPNNESTQTTVDEILNVDEDNDEDESNIFEKPWLLEIDNVPDANRIVGRDDHITFLAKNLRKMRTNSVPDNVLEWGETGTGKTLVARHVCERLEAATEGTDSPIVTAYINPDPISTYTSTFRKIAEQVNAKAENPLEVPYQGLSAEHYRDQKLWPVVQREFSGGLVVIIDEIDKHGEVNEVLYTLSRTQSKDDVDFPVITIGISNDIEFKGEIESRVQSTLQPEHRTFTPYEEDQLIAILENRRDAFYDGVLDDEVIPTTAELAAEEHGDARRAVRLFRNAGEIADEEGDDIVTAEHVHEADELVEVELFMEMVKGTPLSGKLLLFALTRLDRNNPEKEWFRTSEIHEVYQTVARDVKVEPKGYNRALELLNKHVTTGVLESKKKEGGDQGKFRSYSLQGDVESTRTGLINSTPELQTLMGW.

ATP contacts are provided by residues 80-84 (TGKTL), Tyr231, and Arg243.

The protein belongs to the CDC6/cdc18 family.

Its function is as follows. Involved in regulation of DNA replication. This is ORC1-type DNA replication protein 13 (cdc6m) from Haloarcula marismortui (strain ATCC 43049 / DSM 3752 / JCM 8966 / VKM B-1809) (Halobacterium marismortui).